Here is a 78-residue protein sequence, read N- to C-terminus: MAFDKQKLDVTNDVTGRFQNGRLSLYHDNEMIGQMTSMNEYELKSGYSFENEKFYKTADVVSGDDAKYVDCDYENGWC.

This is an uncharacterized protein from Bacillus subtilis (strain 168).